The sequence spans 558 residues: Sinalpyl alcohol oxidase Nec3 (558 aa).

An N-terminal signal peptide occupies residues 1–28 (MATMAILQRTFSFILIFSIALHLKSLFA). An FAD-binding site is contributed by 64–65 (TA). N-linked (GlcNAc...) asparagine glycosylation is present at Asn76. FAD-binding positions include 83 to 84 (ER), Val131, Ser135, and 139 to 142 (NFGF). N-linked (GlcNAc...) asparagine glycosylation occurs at Asn180. Val247 is a binding site for FAD. N-linked (GlcNAc...) asparagine glycosylation is found at Asn308, Asn386, and Asn473. Cys433 and Cys484 are oxidised to a cystine. 492–493 (YH) contacts FAD. His493 functions as the Proton donor in the catalytic mechanism. Catalysis depends on Asn531, which acts as the Proton acceptor. An FAD-binding site is contributed by 532-533 (PQ).

The protein belongs to the GMC oxidoreductase family. As to quaternary structure, monomer. FAD is required as a cofactor. In terms of tissue distribution, confined to nectaries.

The enzyme catalyses (E)-sinapyl alcohol + O2 = (E)-sinapaldehyde + H2O2. It functions in the pathway alkaloid biosynthesis. Its function is as follows. Involved in the production of blood-red nectar containing the alkaloid nesocodin and that serves as a visual attractant for pollinator visitation, including vertebrates such as Phelsuma geckos. The nectar is initially acidic and pale yellow, but slowly becomes alkaline before turning into red within 24 hours. Together with NEC1 and NEC2, facilitates the condensation of sinapaldehyde ((E)-3,5-dimethoxy-4-hydroxycinnamaldehyde) and proline to form nesocodin, a pigment with a stable imine bond. Catalyzes the conversion of sinapyl alcohol to sinapaldehyde. The chain is Sinalpyl alcohol oxidase Nec3 from Nesocodon mauritianus (Blue Mauritius bellflower).